Consider the following 775-residue polypeptide: 5-methyltetrahydropteroyltriglutamate--homocysteine methyltransferase (775 aa).

5-methyltetrahydropteroyltri-L-glutamate-binding positions include 16–19 (REMK) and K115. L-homocysteine is bound by residues 435 to 437 (IGS) and E488. Residues 435–437 (IGS) and E488 each bind L-methionine. Residues 519–520 (RC) and W565 contribute to the 5-methyltetrahydropteroyltri-L-glutamate site. D603 serves as a coordination point for L-homocysteine. An L-methionine-binding site is contributed by D603. E609 lines the 5-methyltetrahydropteroyltri-L-glutamate pocket. Positions 645, 647, and 669 each coordinate Zn(2+). Catalysis depends on H698, which acts as the Proton donor. C730 lines the Zn(2+) pocket.

This sequence belongs to the vitamin-B12 independent methionine synthase family. Zn(2+) is required as a cofactor.

It carries out the reaction 5-methyltetrahydropteroyltri-L-glutamate + L-homocysteine = tetrahydropteroyltri-L-glutamate + L-methionine. It functions in the pathway amino-acid biosynthesis; L-methionine biosynthesis via de novo pathway; L-methionine from L-homocysteine (MetE route): step 1/1. Its function is as follows. Catalyzes the transfer of a methyl group from 5-methyltetrahydrofolate to homocysteine resulting in methionine formation. This chain is 5-methyltetrahydropteroyltriglutamate--homocysteine methyltransferase, found in Coxiella burnetii (strain CbuK_Q154) (Coxiella burnetii (strain Q154)).